The following is a 212-amino-acid chain: Probable dual specificity protein phosphatase DDB_G0269404 (212 aa).

Residues 30–169 (FDAQEVIPNL…LINYEATILK (140 aa)) form the Tyrosine-protein phosphatase domain. The active-site Phosphocysteine intermediate is Cys113.

This sequence belongs to the protein-tyrosine phosphatase family. Non-receptor class dual specificity subfamily.

The enzyme catalyses O-phospho-L-tyrosyl-[protein] + H2O = L-tyrosyl-[protein] + phosphate. It carries out the reaction O-phospho-L-seryl-[protein] + H2O = L-seryl-[protein] + phosphate. It catalyses the reaction O-phospho-L-threonyl-[protein] + H2O = L-threonyl-[protein] + phosphate. Its function is as follows. Has a dual specificity toward Ser/Thr and Tyr-containing proteins. This chain is Probable dual specificity protein phosphatase DDB_G0269404, found in Dictyostelium discoideum (Social amoeba).